A 684-amino-acid chain; its full sequence is Phenoloxidase 2 (684 aa).

A propeptide spanning residues 1–50 is cleaved from the precursor; that stretch reads MADKKNLLLLFDHPTEPVFMDKGKRVTVFDVPDSFLTDRYRPISNEVQSR. Positions 208, 212, and 238 each coordinate Cu cation. E350 serves as the catalytic Proton acceptor. The Cu cation site is built by H365, H369, and H405. N-linked (GlcNAc...) asparagine glycans are attached at residues N448 and N492. Intrachain disulfides connect C581–C623 and C583–C630. N-linked (GlcNAc...) asparagine glycosylation is found at N665 and N677.

Belongs to the tyrosinase family. Requires Cu(2+) as cofactor. Post-translationally, upon activation, a trypsin type protease cleaves prophenol oxidase to yield the active enzyme.

The protein localises to the secreted. The enzyme catalyses 2 L-dopa + O2 = 2 L-dopaquinone + 2 H2O. It carries out the reaction L-tyrosine + O2 = L-dopaquinone + H2O. This is a copper-containing oxidase that functions in the formation of pigments such as melanins and other polyphenolic compounds. Catalyzes the rate-limiting conversions of tyrosine to DOPA, DOPA to DOPA-quinone and possibly 5,6 dihydroxyindole to indole-5'6 quinonee. The chain is Phenoloxidase 2 (PPO2) from Drosophila melanogaster (Fruit fly).